Consider the following 162-residue polypeptide: UPF0262 protein HNE_1347 (162 aa).

This sequence belongs to the UPF0262 family.

The polypeptide is UPF0262 protein HNE_1347 (Hyphomonas neptunium (strain ATCC 15444)).